The sequence spans 89 residues: Small ribosomal subunit protein uS15 (89 aa).

Belongs to the universal ribosomal protein uS15 family. Part of the 30S ribosomal subunit. Forms a bridge to the 50S subunit in the 70S ribosome, contacting the 23S rRNA.

In terms of biological role, one of the primary rRNA binding proteins, it binds directly to 16S rRNA where it helps nucleate assembly of the platform of the 30S subunit by binding and bridging several RNA helices of the 16S rRNA. Forms an intersubunit bridge (bridge B4) with the 23S rRNA of the 50S subunit in the ribosome. The sequence is that of Small ribosomal subunit protein uS15 from Lactobacillus johnsonii (strain CNCM I-12250 / La1 / NCC 533).